The sequence spans 102 residues: Urease subunit beta (102 aa).

The protein belongs to the urease beta subunit family. As to quaternary structure, heterotrimer of UreA (gamma), UreB (beta) and UreC (alpha) subunits. Three heterotrimers associate to form the active enzyme.

The protein localises to the cytoplasm. It carries out the reaction urea + 2 H2O + H(+) = hydrogencarbonate + 2 NH4(+). It functions in the pathway nitrogen metabolism; urea degradation; CO(2) and NH(3) from urea (urease route): step 1/1. The sequence is that of Urease subunit beta from Bordetella pertussis (strain Tohama I / ATCC BAA-589 / NCTC 13251).